The primary structure comprises 511 residues: GMP synthase [glutamine-hydrolyzing] (511 aa).

The region spanning 5–195 (IVIVLDFGGQ…LFNICGCKGD (191 aa)) is the Glutamine amidotransferase type-1 domain. Residue Cys82 is the Nucleophile of the active site. Residues His169 and Glu171 contribute to the active site. Residues 196–386 (WKTSSFIEER…LGIPEKIVKR (191 aa)) enclose the GMPS ATP-PPase domain. An ATP-binding site is contributed by 223–229 (SGGVDSS).

In terms of assembly, homodimer.

The enzyme catalyses XMP + L-glutamine + ATP + H2O = GMP + L-glutamate + AMP + diphosphate + 2 H(+). Its pathway is purine metabolism; GMP biosynthesis; GMP from XMP (L-Gln route): step 1/1. In terms of biological role, catalyzes the synthesis of GMP from XMP. The polypeptide is GMP synthase [glutamine-hydrolyzing] (Caldicellulosiruptor saccharolyticus (strain ATCC 43494 / DSM 8903 / Tp8T 6331)).